The sequence spans 129 residues: Glycine cleavage system H protein (129 aa).

Residues 24-106 (LLKIGVSEFA…IGEGWLVILK (83 aa)) enclose the Lipoyl-binding domain. Residue K65 is modified to N6-lipoyllysine.

The protein belongs to the GcvH family. The glycine cleavage system is composed of four proteins: P, T, L and H. Requires (R)-lipoate as cofactor.

Its function is as follows. The glycine cleavage system catalyzes the degradation of glycine. The H protein shuttles the methylamine group of glycine from the P protein to the T protein. The sequence is that of Glycine cleavage system H protein from Prochlorococcus marinus (strain AS9601).